Reading from the N-terminus, the 466-residue chain is Probable periplasmic serine protease do/HhoA-like (466 aa).

The signal sequence occupies residues 1-29 (MKKTRFVLNSIALGLSVLSTSFVAHVAQA). Catalysis depends on charge relay system residues H120, D150, and S226. PDZ domains lie at 270–361 (ILEF…LRDG) and 367–458 (KMKL…LRGD).

This sequence belongs to the peptidase S1C family.

The protein resides in the periplasm. In Haemophilus influenzae (strain ATCC 51907 / DSM 11121 / KW20 / Rd), this protein is Probable periplasmic serine protease do/HhoA-like.